A 367-amino-acid polypeptide reads, in one-letter code: Aminomethyltransferase (367 aa).

Belongs to the GcvT family. As to quaternary structure, the glycine cleavage system is composed of four proteins: P, T, L and H.

The enzyme catalyses N(6)-[(R)-S(8)-aminomethyldihydrolipoyl]-L-lysyl-[protein] + (6S)-5,6,7,8-tetrahydrofolate = N(6)-[(R)-dihydrolipoyl]-L-lysyl-[protein] + (6R)-5,10-methylene-5,6,7,8-tetrahydrofolate + NH4(+). Its function is as follows. The glycine cleavage system catalyzes the degradation of glycine. The protein is Aminomethyltransferase of Lysinibacillus sphaericus (strain C3-41).